Consider the following 271-residue polypeptide: 4-hydroxy-tetrahydrodipicolinate reductase (271 aa).

Residues 10–15, Glu-36, 100–102, and 124–127 each bind NAD(+); these read GAGGRM, GTT, and SGNM. The active-site Proton donor/acceptor is His-157. (S)-2,3,4,5-tetrahydrodipicolinate is bound at residue His-158. The active-site Proton donor is the Lys-161. A (S)-2,3,4,5-tetrahydrodipicolinate-binding site is contributed by 167–168; sequence GT.

This sequence belongs to the DapB family.

The protein resides in the cytoplasm. It carries out the reaction (S)-2,3,4,5-tetrahydrodipicolinate + NAD(+) + H2O = (2S,4S)-4-hydroxy-2,3,4,5-tetrahydrodipicolinate + NADH + H(+). It catalyses the reaction (S)-2,3,4,5-tetrahydrodipicolinate + NADP(+) + H2O = (2S,4S)-4-hydroxy-2,3,4,5-tetrahydrodipicolinate + NADPH + H(+). The protein operates within amino-acid biosynthesis; L-lysine biosynthesis via DAP pathway; (S)-tetrahydrodipicolinate from L-aspartate: step 4/4. In terms of biological role, catalyzes the conversion of 4-hydroxy-tetrahydrodipicolinate (HTPA) to tetrahydrodipicolinate. This chain is 4-hydroxy-tetrahydrodipicolinate reductase, found in Rhodopseudomonas palustris (strain HaA2).